A 27-amino-acid chain; its full sequence is Ranatuerin-2Cb (27 aa).

The cysteines at positions 20 and 25 are disulfide-linked.

As to expression, expressed by the skin glands.

It localises to the secreted. Its function is as follows. Antibacterial activity against Gram-positive bacterium S.aureus (MIC=40 uM) and Gram-negative bacterium E.coli (MIC=2 uM). Has activity against C.albicans (MIC=46 uM). The sequence is that of Ranatuerin-2Cb from Lithobates clamitans (Green frog).